The sequence spans 436 residues: Na(+)/H(+) antiporter NhaA (436 aa).

11 helical membrane-spanning segments follow: residues 14-34, 59-79, 95-115, 125-145, 152-172, 176-196, 214-234, 300-320, 336-356, 374-394, and 407-427; these read AGGI…NSTW, LHHW…GLEL, ALPV…YHQF, WGIP…LLAW, IIFL…VIAI, PALH…LLLF, FWYF…FLAF, AIQP…NAGI, IGTC…SSWL, LLGA…IGQL, and LGIL…LFQV.

It belongs to the NhaA Na(+)/H(+) (TC 2.A.33) antiporter family.

The protein localises to the cell inner membrane. It catalyses the reaction Na(+)(in) + 2 H(+)(out) = Na(+)(out) + 2 H(+)(in). In terms of biological role, na(+)/H(+) antiporter that extrudes sodium in exchange for external protons. The sequence is that of Na(+)/H(+) antiporter NhaA from Acidithiobacillus ferrooxidans (strain ATCC 23270 / DSM 14882 / CIP 104768 / NCIMB 8455) (Ferrobacillus ferrooxidans (strain ATCC 23270)).